Reading from the N-terminus, the 267-residue chain is Tryptophan synthase alpha chain (267 aa).

Catalysis depends on proton acceptor residues Glu-47 and Asp-58.

The protein belongs to the TrpA family. Tetramer of two alpha and two beta chains.

The enzyme catalyses (1S,2R)-1-C-(indol-3-yl)glycerol 3-phosphate + L-serine = D-glyceraldehyde 3-phosphate + L-tryptophan + H2O. It functions in the pathway amino-acid biosynthesis; L-tryptophan biosynthesis; L-tryptophan from chorismate: step 5/5. The alpha subunit is responsible for the aldol cleavage of indoleglycerol phosphate to indole and glyceraldehyde 3-phosphate. The protein is Tryptophan synthase alpha chain of Pelodictyon phaeoclathratiforme (strain DSM 5477 / BU-1).